A 326-amino-acid chain; its full sequence is Nicotianamine synthase 2 (326 aa).

The protein belongs to the nicotianamine synthase (NAS)-like family. In terms of tissue distribution, expressed in roots.

The catalysed reaction is 3 S-adenosyl-L-methionine = nicotianamine + 3 S-methyl-5'-thioadenosine + 3 H(+). Synthesizes nicotianamine, a polyamine that is the first intermediate in the synthesis of the phytosiderophores of the mugineic acid type found in gramineae which serve as a sensor for the physiological iron status within the plant, and/or might be involved in the transport of iron. The sequence is that of Nicotianamine synthase 2 (NAS2) from Oryza sativa subsp. japonica (Rice).